The following is a 470-amino-acid chain: Aminodeoxychorismate synthase component 1 (470 aa).

The protein belongs to the anthranilate synthase component I family. In terms of assembly, monomer. Heterodimer consisting of two non-identical subunits: a glutamine amidotransferase subunit (PabA) and a aminodeoxychorismate synthase subunit (PabB). Mg(2+) is required as a cofactor.

The enzyme catalyses chorismate + L-glutamine = 4-amino-4-deoxychorismate + L-glutamate. The protein operates within cofactor biosynthesis; tetrahydrofolate biosynthesis; 4-aminobenzoate from chorismate: step 1/2. In terms of biological role, part of a heterodimeric complex that catalyzes the two-step biosynthesis of 4-amino-4-deoxychorismate (ADC), a precursor of p-aminobenzoate (PABA) and tetrahydrofolate. In the first step, a glutamine amidotransferase (PabA) generates ammonia as a substrate that, along with chorismate, is used in the second step, catalyzed by aminodeoxychorismate synthase (PabB) to produce ADC. The polypeptide is Aminodeoxychorismate synthase component 1 (pabB) (Lactococcus lactis subsp. lactis (Streptococcus lactis)).